A 148-amino-acid chain; its full sequence is Small ribosomal subunit protein bS6 (148 aa).

Residues His-96 to Ala-148 are disordered.

The protein belongs to the bacterial ribosomal protein bS6 family.

Its function is as follows. Binds together with bS18 to 16S ribosomal RNA. The polypeptide is Small ribosomal subunit protein bS6 (Brucella canis (strain ATCC 23365 / NCTC 10854 / RM-666)).